The following is a 139-amino-acid chain: Large-conductance mechanosensitive channel 1 (139 aa).

A run of 3 helical transmembrane segments spans residues 8 to 28 (FISKGNVMDLAVGVIIGAAFG), 30 to 50 (IVDSLVNDIIMPIIGAIFGGL), and 81 to 101 (GSFITVALNFVILAFIIFLMV).

This sequence belongs to the MscL family. Homopentamer.

Its subcellular location is the cell inner membrane. Its function is as follows. Channel that opens in response to stretch forces in the membrane lipid bilayer. May participate in the regulation of osmotic pressure changes within the cell. The sequence is that of Large-conductance mechanosensitive channel 1 from Mesorhizobium japonicum (strain LMG 29417 / CECT 9101 / MAFF 303099) (Mesorhizobium loti (strain MAFF 303099)).